The chain runs to 447 residues: Phosphoglucosamine mutase (447 aa).

S100 serves as the catalytic Phosphoserine intermediate. The Mg(2+) site is built by S100, D240, D242, and D244. The residue at position 100 (S100) is a Phosphoserine.

The protein belongs to the phosphohexose mutase family. Requires Mg(2+) as cofactor. In terms of processing, activated by phosphorylation.

The catalysed reaction is alpha-D-glucosamine 1-phosphate = D-glucosamine 6-phosphate. Catalyzes the conversion of glucosamine-6-phosphate to glucosamine-1-phosphate. The chain is Phosphoglucosamine mutase from Clostridium botulinum (strain Eklund 17B / Type B).